Consider the following 153-residue polypeptide: Deoxyuridine 5'-triphosphate nucleotidohydrolase (153 aa).

Substrate contacts are provided by residues 65 to 67 (RSG), N78, and 82 to 84 (TID). Residues 132-153 (MTQRGEGGFGHTGISAVHPRTH) form a disordered region.

Belongs to the dUTPase family. Requires Mg(2+) as cofactor.

It carries out the reaction dUTP + H2O = dUMP + diphosphate + H(+). It functions in the pathway pyrimidine metabolism; dUMP biosynthesis; dUMP from dCTP (dUTP route): step 2/2. Functionally, this enzyme is involved in nucleotide metabolism: it produces dUMP, the immediate precursor of thymidine nucleotides and it decreases the intracellular concentration of dUTP so that uracil cannot be incorporated into DNA. This Chlorobium limicola (strain DSM 245 / NBRC 103803 / 6330) protein is Deoxyuridine 5'-triphosphate nucleotidohydrolase.